A 170-amino-acid chain; its full sequence is Lipoprotein signal peptidase (170 aa).

3 helical membrane passes run 12 to 32 (WYWI…WVLS), 67 to 87 (WQRW…SVWL), and 94 to 113 (MWRL…GNLI). Residues Asp-123 and Asp-141 contribute to the active site. Residues 133–153 (HFPAFNIADSAICIGAGLIIL) traverse the membrane as a helical segment.

It belongs to the peptidase A8 family.

Its subcellular location is the cell inner membrane. The enzyme catalyses Release of signal peptides from bacterial membrane prolipoproteins. Hydrolyzes -Xaa-Yaa-Zaa-|-(S,diacylglyceryl)Cys-, in which Xaa is hydrophobic (preferably Leu), and Yaa (Ala or Ser) and Zaa (Gly or Ala) have small, neutral side chains.. It participates in protein modification; lipoprotein biosynthesis (signal peptide cleavage). This protein specifically catalyzes the removal of signal peptides from prolipoproteins. This is Lipoprotein signal peptidase from Shewanella piezotolerans (strain WP3 / JCM 13877).